We begin with the raw amino-acid sequence, 99 residues long: Pterin-4-alpha-carbinolamine dehydratase (99 aa).

Belongs to the pterin-4-alpha-carbinolamine dehydratase family.

The catalysed reaction is (4aS,6R)-4a-hydroxy-L-erythro-5,6,7,8-tetrahydrobiopterin = (6R)-L-erythro-6,7-dihydrobiopterin + H2O. Its function is as follows. Involved in tetrahydrobiopterin biosynthesis. This is Pterin-4-alpha-carbinolamine dehydratase (pcbd) from Dictyostelium discoideum (Social amoeba).